Consider the following 370-residue polypeptide: MNSGEISIVFSGGGTGGHIYPAVAVADYLKKRYNNLNIVFIGTNEGLESKIVPQHGYKIEYIQAKGLKRSLTVKNVEVFLKFISGYRQALQILKRIKPKVVFVTGGYVSLPVALAARRLKIKTILHEQNAYPGLANKIISRFCEKILISFEESKRFFKNSNKVVLTGNPVRLEIFSHNERAAKSSLGLEDKIIVLAVGGSRGAENLNKAVIRLSKEFEGCKDVYFILSSGDTKYLEAVNFANSLGVKSNIKILPYISDMPRYLAAADIVISRAGAIAISEITALGKPSIIVPSPYVANNHQEYNAKALEKVGACFVVLESELESDKLKSFLEKLIYDKALYERMSESSKKMGKPEATQNIGKIFEEYLSL.

Residues 15 to 17, Asn129, Arg171, Ser200, Ile256, and Gln301 each bind UDP-N-acetyl-alpha-D-glucosamine; that span reads TGG.

It belongs to the glycosyltransferase 28 family. MurG subfamily.

The protein localises to the cell membrane. It catalyses the reaction di-trans,octa-cis-undecaprenyl diphospho-N-acetyl-alpha-D-muramoyl-L-alanyl-D-glutamyl-meso-2,6-diaminopimeloyl-D-alanyl-D-alanine + UDP-N-acetyl-alpha-D-glucosamine = di-trans,octa-cis-undecaprenyl diphospho-[N-acetyl-alpha-D-glucosaminyl-(1-&gt;4)]-N-acetyl-alpha-D-muramoyl-L-alanyl-D-glutamyl-meso-2,6-diaminopimeloyl-D-alanyl-D-alanine + UDP + H(+). Its pathway is cell wall biogenesis; peptidoglycan biosynthesis. Cell wall formation. Catalyzes the transfer of a GlcNAc subunit on undecaprenyl-pyrophosphoryl-MurNAc-pentapeptide (lipid intermediate I) to form undecaprenyl-pyrophosphoryl-MurNAc-(pentapeptide)GlcNAc (lipid intermediate II). This is UDP-N-acetylglucosamine--N-acetylmuramyl-(pentapeptide) pyrophosphoryl-undecaprenol N-acetylglucosamine transferase from Caldicellulosiruptor saccharolyticus (strain ATCC 43494 / DSM 8903 / Tp8T 6331).